Here is a 130-residue protein sequence, read N- to C-terminus: MIVRTTDEITGTNRDVAAEHWRSKRIILADDGVGFSFHETTIDANSVSEFHYQHHVEAVWVVEGTGTLTNHETGEVHPLRPGTMYLLNGHERHRVTCDTTMRMLCVFNPPVTGREIHDENGAYPAAVQAS.

This sequence belongs to the ectoine synthase family.

The enzyme catalyses (2S)-4-acetamido-2-aminobutanoate = L-ectoine + H2O. Its pathway is amine and polyamine biosynthesis; ectoine biosynthesis; L-ectoine from L-aspartate 4-semialdehyde: step 3/3. Functionally, catalyzes the circularization of gamma-N-acetyl-alpha,gamma-diaminobutyric acid (ADABA) to ectoine (1,4,5,6-tetrahydro-2-methyl-4-pyrimidine carboxylic acid), which is an excellent osmoprotectant. This chain is L-ectoine synthase, found in Mycolicibacterium vanbaalenii (strain DSM 7251 / JCM 13017 / BCRC 16820 / KCTC 9966 / NRRL B-24157 / PYR-1) (Mycobacterium vanbaalenii).